The sequence spans 196 residues: MPIGVPKVPFRSPGEGDTSWVDIYNRLYRERLFFLGQEVDTDISNQLISLMIYLSIEKDTKDLYLFINSPGGWVISGMAIYDTMQFVRPDVQTICMGLAASIASFILVGGAITKRIAFPHARVMIHQPASSFYEAQTGEFILEAEELLKLRETITRVYVQRTGKPIWVVSEDMERDVFMSATEAQAHGIVDLVAVQ.

Serine 101 serves as the catalytic Nucleophile. The active site involves histidine 126.

It belongs to the peptidase S14 family. In terms of assembly, component of the chloroplastic Clp protease core complex.

The protein localises to the plastid. It localises to the chloroplast stroma. The enzyme catalyses Hydrolysis of proteins to small peptides in the presence of ATP and magnesium. alpha-casein is the usual test substrate. In the absence of ATP, only oligopeptides shorter than five residues are hydrolyzed (such as succinyl-Leu-Tyr-|-NHMec, and Leu-Tyr-Leu-|-Tyr-Trp, in which cleavage of the -Tyr-|-Leu- and -Tyr-|-Trp bonds also occurs).. Cleaves peptides in various proteins in a process that requires ATP hydrolysis. Has a chymotrypsin-like activity. Plays a major role in the degradation of misfolded proteins. The protein is ATP-dependent Clp protease proteolytic subunit of Aethionema cordifolium (Lebanon stonecress).